A 505-amino-acid chain; its full sequence is Calcium/calmodulin-dependent protein kinase kinase 1 (505 aa).

Residues 28 to 66 (LEEADEGPEPARNGVDPPPRARAASVIPGSASRPTPVRP) are disordered. Phosphoserine is present on residues Ser67 and Ser74. Position 78 is an asymmetric dimethylarginine (Arg78). Residues 84 to 105 (LGAQVGPYSTGPASHISPRSWR) form a disordered region. A Phosphoserine modification is found at Ser100. At Thr108 the chain carries Phosphothreonine. A Protein kinase domain is found at 128–409 (YKLQSEIGKG…VSDIKLHPWV (282 aa)). ATP is bound by residues 134–142 (IGKGAYGVV) and Lys157. The RP domain stretch occupies residues 167 to 189 (QYGFPRRPPPRGSQATQGGPAKQ). Catalysis depends on Asp275, which acts as the Proton acceptor. An autoinhibitory domain region spans residues 435-440 (KNSVRL). The calmodulin-binding stretch occupies residues 438–463 (VRLIPSWTTVILVKSMLRKRSFGNPF). Ser458, Ser475, and Ser492 each carry phosphoserine. Positions 460 to 505 (GNPFEPQARREERSMSAPGSLLMKEGCGEGCKSPELPGVQEDEAAS) are disordered.

The protein belongs to the protein kinase superfamily. Ser/Thr protein kinase family. As to quaternary structure, interacts with CAMK4 and calmodulin. In terms of processing, appears to be autophosphorylated in a Ca(2+)/calmodulin-dependent manner. Phosphorylated at multiple sites by PRCAKA/PKA. Phosphorylation of Ser-458 is blocked upon binding to Ca(2+)/calmodulin. In vitro, phosphorylated by CAMK1 and CAMK4. As to expression, widely expressed. Differentially expressed in various brain regions.

It localises to the cytoplasm. It is found in the nucleus. It carries out the reaction L-seryl-[protein] + ATP = O-phospho-L-seryl-[protein] + ADP + H(+). The enzyme catalyses L-threonyl-[protein] + ATP = O-phospho-L-threonyl-[protein] + ADP + H(+). With respect to regulation, activated by Ca(2+)/calmodulin. Binding of calmodulin may relieve intrasteric autoinhibition. Partially inhibited upon phosphorylation by PRCAKA/PKA. May be regulated through phosphorylation by CAMK1 and CAMK4. Its function is as follows. Calcium/calmodulin-dependent protein kinase that belongs to a proposed calcium-triggered signaling cascade involved in a number of cellular processes. Phosphorylates CAMK1, CAMK1D, CAMK1G and CAMK4. Involved in regulating cell apoptosis. Promotes cell survival by phosphorylating AKT1/PKB that inhibits pro-apoptotic BAD/Bcl2-antagonist of cell death. The sequence is that of Calcium/calmodulin-dependent protein kinase kinase 1 (Camkk1) from Mus musculus (Mouse).